A 365-amino-acid polypeptide reads, in one-letter code: MRQDDAQLRHIFLHDVPLLDVRAPVEFAQGAFPGAVNHPLMDDAERHQVGLCYRQQGQPAAIALGQQLVSGHTRRERIAAWAAFAQAHPDGLLYCLRGGLRSQIALQWLHSEAGIAYPRVPGGYKALRMFLIDTTQAAAQECDFVLLSGLTGTGKTALIAQLAQGLDLEGHANHRGSSFGQRLDGQPSQVDFEHRLAIDILKKQARGHRAFVLEDEGRHVGRCSVPLALRQRLERAPIVCLQDSFGARVERIVGDYVIGQCADFVAAHGPALGFERFSTRLLDSLGKLARRLGGARYQQLHADMQAALARQQASGDIDLHRHWIAALVRDYYDPMYAFQRQSRPGRIVFEGDLPAVLAYLRAGCG.

Residues 12 to 136 enclose the Rhodanese domain; it reads FLHDVPLLDV…LRMFLIDTTQ (125 aa). Cys95 acts as the S-selanylcysteine intermediate in catalysis.

It belongs to the SelU family. Monomer.

The enzyme catalyses 5-methylaminomethyl-2-thiouridine(34) in tRNA + selenophosphate + (2E)-geranyl diphosphate + H2O + H(+) = 5-methylaminomethyl-2-selenouridine(34) in tRNA + (2E)-thiogeraniol + phosphate + diphosphate. It carries out the reaction 5-methylaminomethyl-2-thiouridine(34) in tRNA + (2E)-geranyl diphosphate = 5-methylaminomethyl-S-(2E)-geranyl-thiouridine(34) in tRNA + diphosphate. The catalysed reaction is 5-methylaminomethyl-S-(2E)-geranyl-thiouridine(34) in tRNA + selenophosphate + H(+) = 5-methylaminomethyl-2-(Se-phospho)selenouridine(34) in tRNA + (2E)-thiogeraniol. It catalyses the reaction 5-methylaminomethyl-2-(Se-phospho)selenouridine(34) in tRNA + H2O = 5-methylaminomethyl-2-selenouridine(34) in tRNA + phosphate. Functionally, involved in the post-transcriptional modification of the uridine at the wobble position (U34) of tRNA(Lys), tRNA(Glu) and tRNA(Gln). Catalyzes the conversion of 2-thiouridine (S2U-RNA) to 2-selenouridine (Se2U-RNA). Acts in a two-step process involving geranylation of 2-thiouridine (S2U) to S-geranyl-2-thiouridine (geS2U) and subsequent selenation of the latter derivative to 2-selenouridine (Se2U) in the tRNA chain. In Verminephrobacter eiseniae (strain EF01-2), this protein is tRNA 2-selenouridine synthase.